The primary structure comprises 533 residues: Glucose-6-phosphate isomerase (533 aa).

The active-site Proton donor is E341. Catalysis depends on residues H372 and K501.

The protein belongs to the GPI family.

It is found in the cytoplasm. It carries out the reaction alpha-D-glucose 6-phosphate = beta-D-fructose 6-phosphate. Its pathway is carbohydrate biosynthesis; gluconeogenesis. It functions in the pathway carbohydrate degradation; glycolysis; D-glyceraldehyde 3-phosphate and glycerone phosphate from D-glucose: step 2/4. In terms of biological role, catalyzes the reversible isomerization of glucose-6-phosphate to fructose-6-phosphate. The polypeptide is Glucose-6-phosphate isomerase (Cereibacter sphaeroides (strain ATCC 17029 / ATH 2.4.9) (Rhodobacter sphaeroides)).